Reading from the N-terminus, the 189-residue chain is Apolipoprotein D (189 aa).

An N-terminal signal peptide occupies residues 1–20 (MGMMLLLLSMLAGLVAEAEG). A Pyrrolidone carboxylic acid modification is found at Gln21. 2 disulfides stabilise this stretch: Cys28/Cys134 and Cys61/Cys185. N-linked (GlcNAc...) asparagine glycans are attached at residues Asn65 and Asn98.

This sequence belongs to the calycin superfamily. Lipocalin family. In terms of assembly, homodimer.

It is found in the secreted. APOD occurs in the macromolecular complex with lecithin-transport and binding of bilin. Appears to be able to transport a variety of ligands in a number of different contexts. This chain is Apolipoprotein D (APOD), found in Cavia porcellus (Guinea pig).